We begin with the raw amino-acid sequence, 920 residues long: Phosphoenolpyruvate carboxylase (920 aa).

Residues H138 and K583 contribute to the active site.

It belongs to the PEPCase type 1 family. It depends on Mg(2+) as a cofactor.

It carries out the reaction oxaloacetate + phosphate = phosphoenolpyruvate + hydrogencarbonate. Its function is as follows. Forms oxaloacetate, a four-carbon dicarboxylic acid source for the tricarboxylic acid cycle. This chain is Phosphoenolpyruvate carboxylase, found in Streptococcus pyogenes serotype M3 (strain ATCC BAA-595 / MGAS315).